A 386-amino-acid polypeptide reads, in one-letter code: Alkanesulfonate monooxygenase (386 aa).

Belongs to the SsuD family.

It catalyses the reaction an alkanesulfonate + FMNH2 + O2 = an aldehyde + FMN + sulfite + H2O + 2 H(+). In terms of biological role, catalyzes the desulfonation of aliphatic sulfonates. The protein is Alkanesulfonate monooxygenase of Delftia acidovorans (strain DSM 14801 / SPH-1).